The sequence spans 223 residues: Mediator of RNA polymerase II transcription subunit 8 (223 aa).

Residues 2–138 (SQSTASLVPE…VRETSGVTTA (137 aa)) are interaction with TBP1. A coiled-coil region spans residues 33 to 59 (LDAVRMRLAQLTHSLRRIRDEMSKAEL).

This sequence belongs to the Mediator complex subunit 8 family. As to quaternary structure, component of the Mediator complex, which is composed of at least 21 subunits that form three structurally distinct submodules. The Mediator head module contains MED6, MED8, MED11, SRB4/MED17, SRB5/MED18, ROX3/MED19, SRB2/MED20 and SRB6/MED22, the middle module contains MED1, MED4, NUT1/MED5, MED7, CSE2/MED9, NUT2/MED10, SRB7/MED21 and SOH1/MED31, and the tail module contains MED2, PGD1/MED3, RGR1/MED14, GAL11/MED15 and SIN4/MED16. The head and the middle modules interact directly with RNA polymerase II, whereas the elongated tail module interacts with gene-specific regulatory proteins. MED8 interacts directly with SRB5/MED18. Also interacts with Hexokinase B (HXK2). Interacts with TBP1.

The protein localises to the nucleus. Its function is as follows. Component of the Mediator complex, a coactivator involved in the regulated transcription of nearly all RNA polymerase II-dependent genes. Mediator functions as a bridge to convey information from gene-specific regulatory proteins to the basal RNA polymerase II transcription machinery. The Mediator complex, having a compact conformation in its free form, is recruited to promoters by direct interactions with regulatory proteins and serves for the assembly of a functional preinitiation complex with RNA polymerase II and the general transcription factors. The Mediator complex unfolds to an extended conformation and partially surrounds RNA polymerase II, specifically interacting with the unphosphorylated form of the C-terminal domain (CTD) of RNA polymerase II. The Mediator complex dissociates from the RNA polymerase II holoenzyme and stays at the promoter when transcriptional elongation begins. MED8 binds to the consensus sequence 5'-[AC][AG]GAAAT-3' in both the UAS of SUC2 and the DRS2 of HXK2. This is Mediator of RNA polymerase II transcription subunit 8 (MED8) from Saccharomyces cerevisiae (strain ATCC 204508 / S288c) (Baker's yeast).